The sequence spans 534 residues: CD276 antigen (534 aa).

The signal sequence occupies residues M1–A28. The Ig-like V-type 1 domain maps to L29–A139. The Extracellular portion of the chain corresponds to L29–A466. Intrachain disulfides connect C50–C122, C165–C220, C268–C340, and C383–C438. Residues N104, N189, N215, N322, N407, and N433 are each glycosylated (N-linked (GlcNAc...) asparagine). One can recognise an Ig-like C2-type 1 domain in the interval P145 to T238. Positions P243–A357 constitute an Ig-like V-type 2 domain. The Ig-like C2-type 2 domain maps to P363–T456. The helical transmembrane segment at L467–V487 threads the bilayer. Over C488–A534 the chain is Cytoplasmic. Residues E498 to G510 show a composition bias toward acidic residues. Residues E498–A534 form a disordered region. S525 is subject to Phosphoserine.

It belongs to the immunoglobulin superfamily. BTN/MOG family. As to quaternary structure, interacts with TREML2 and this interaction enhances T-cell activation. As to expression, ubiquitous but not detectable in peripheral blood lymphocytes or granulocytes. Weakly expressed in resting monocytes. Expressed in dendritic cells derived from monocytes. Expressed in epithelial cells of sinonasal tissue. Expressed in extravillous trophoblast cells and Hofbauer cells of the first trimester placenta and term placenta.

It localises to the membrane. Functionally, may participate in the regulation of T-cell-mediated immune response. May play a protective role in tumor cells by inhibiting natural-killer mediated cell lysis as well as a role of marker for detection of neuroblastoma cells. May be involved in the development of acute and chronic transplant rejection and in the regulation of lymphocytic activity at mucosal surfaces. Could also play a key role in providing the placenta and fetus with a suitable immunological environment throughout pregnancy. Both isoform 1 and isoform 2 appear to be redundant in their ability to modulate CD4 T-cell responses. Isoform 2 is shown to enhance the induction of cytotoxic T-cells and selectively stimulates interferon gamma production in the presence of T-cell receptor signaling. This Homo sapiens (Human) protein is CD276 antigen (CD276).